A 201-amino-acid chain; its full sequence is MSYLGVGVSPGNVTGSSTKMKLIDRKVRVTELILRSLVCAFALVAAILVATDVQVREIFTIQKKAKFTDMKALVFLVVINGIAAGYSLVQAVCCLVGLMKGSVLLSEPLAWAIFFGDQAVAYLCVAGVAAAAQSAAFAKLGQPELQWMKICDMYGKFCNQVGEGIASALFACIGMVLISCISAFGVFRLYGGSKPRQSSRW.

Residues 1–28 (MSYLGVGVSPGNVTGSSTKMKLIDRKVR) lie on the Cytoplasmic side of the membrane. Residues 29-49 (VTELILRSLVCAFALVAAILV) traverse the membrane as a helical segment. Topologically, residues 50-71 (ATDVQVREIFTIQKKAKFTDMK) are extracellular. The helical transmembrane segment at 72–92 (ALVFLVVINGIAAGYSLVQAV) threads the bilayer. Over 93 to 108 (CCLVGLMKGSVLLSEP) the chain is Cytoplasmic. Residues 109-129 (LAWAIFFGDQAVAYLCVAGVA) traverse the membrane as a helical segment. The Extracellular portion of the chain corresponds to 130-166 (AAAQSAAFAKLGQPELQWMKICDMYGKFCNQVGEGIA). A helical membrane pass occupies residues 167–187 (SALFACIGMVLISCISAFGVF). The Cytoplasmic segment spans residues 188 to 201 (RLYGGSKPRQSSRW).

The protein belongs to the Casparian strip membrane proteins (CASP) family. In terms of assembly, homodimer and heterodimers.

The protein resides in the cell membrane. This Arabidopsis lyrata subsp. lyrata (Lyre-leaved rock-cress) protein is CASP-like protein 2B2.